A 429-amino-acid polypeptide reads, in one-letter code: 3-phosphoshikimate 1-carboxyvinyltransferase (429 aa).

3-phosphoshikimate contacts are provided by K23, S24, and R28. K23 is a binding site for phosphoenolpyruvate. Phosphoenolpyruvate is bound by residues G95 and R123. Positions 168, 170, 316, and 343 each coordinate 3-phosphoshikimate. Q170 contributes to the phosphoenolpyruvate binding site. D316 functions as the Proton acceptor in the catalytic mechanism. Phosphoenolpyruvate contacts are provided by R347 and R389.

It belongs to the EPSP synthase family. In terms of assembly, monomer.

It is found in the cytoplasm. The enzyme catalyses 3-phosphoshikimate + phosphoenolpyruvate = 5-O-(1-carboxyvinyl)-3-phosphoshikimate + phosphate. It participates in metabolic intermediate biosynthesis; chorismate biosynthesis; chorismate from D-erythrose 4-phosphate and phosphoenolpyruvate: step 6/7. In terms of biological role, catalyzes the transfer of the enolpyruvyl moiety of phosphoenolpyruvate (PEP) to the 5-hydroxyl of shikimate-3-phosphate (S3P) to produce enolpyruvyl shikimate-3-phosphate and inorganic phosphate. The chain is 3-phosphoshikimate 1-carboxyvinyltransferase from Bacillus cereus (strain ATCC 10987 / NRS 248).